The following is a 354-amino-acid chain: Arginase-2, mitochondrial (354 aa).

The N-terminal 22 residues, 1-22 (MSYGSCVSRLLRTRVQSVLKKS), are a transit peptide targeting the mitochondrion. Residues H120, D143, H145, and D147 each contribute to the Mn(2+) site. Residues 145-149 (HADIN), 156-158 (SGN), and D202 contribute to the substrate site. 2 residues coordinate Mn(2+): D251 and D253. 2 residues coordinate substrate: T265 and E296. Residues 330 to 354 (GHTVYEQLPPPSSPHESENAERVRI) form a disordered region. Residues 344 to 354 (HESENAERVRI) are compositionally biased toward basic and acidic residues.

It belongs to the arginase family. In terms of assembly, homotrimer. Mn(2+) is required as a cofactor.

The protein resides in the mitochondrion. The catalysed reaction is L-arginine + H2O = urea + L-ornithine. It participates in nitrogen metabolism; urea cycle; L-ornithine and urea from L-arginine: step 1/1. Functionally, may play a role in the regulation of extra-urea cycle arginine metabolism and also in down-regulation of nitric oxide synthesis. Extrahepatic arginase functions to regulate L-arginine bioavailability to nitric oxid synthase (NOS). Arginine metabolism is a critical regulator of innate and adaptive immune responses. Seems to be involved in negative regulation of the survival capacity of activated T cells. May suppress inflammation-related signaling in asthmatic airway epithelium. May play a role in promoting prenatal immune suppression. Regulates RPS6KB1 signaling, which promotes endothelial cell senescence and inflammation and implicates NOS3/eNOS dysfunction. Can inhibit endothelial autophagy independently of its enzymatic activity implicating mTORC2 signaling. Involved in vascular smooth muscle cell senescence and apoptosis independently of its enzymatic activity. The polypeptide is Arginase-2, mitochondrial (ARG2) (Oryctolagus cuniculus (Rabbit)).